A 634-amino-acid polypeptide reads, in one-letter code: Chaperone protein dnaK2 (634 aa).

At threonine 197 the chain carries Phosphothreonine; by autocatalysis. Low complexity predominate over residues 601-620 (SAEASANAQAGPSSSSSSSS). The disordered stretch occupies residues 601–634 (SAEASANAQAGPSSSSSSSSGDDDVIDAEFSESK). The segment covering 621-634 (GDDDVIDAEFSESK) has biased composition (acidic residues).

This sequence belongs to the heat shock protein 70 family.

Its function is as follows. Acts as a chaperone. The protein is Chaperone protein dnaK2 (dnaK2) of Synechococcus elongatus (strain ATCC 33912 / PCC 7942 / FACHB-805) (Anacystis nidulans R2).